We begin with the raw amino-acid sequence, 290 residues long: Small ribosomal subunit biogenesis GTPase RsgA (290 aa).

Residues 62 to 213 form the CP-type G domain; it reads KNSLVRPPIV…IADTPGFSSL (152 aa). GTP contacts are provided by residues 111–114 and 156–164; these read SKTD and GQTGVGKTT. Zn(2+) contacts are provided by C237, C242, H244, and C250.

The protein belongs to the TRAFAC class YlqF/YawG GTPase family. RsgA subfamily. Monomer. Associates with 30S ribosomal subunit, binds 16S rRNA. Zn(2+) serves as cofactor.

The protein resides in the cytoplasm. In terms of biological role, one of several proteins that assist in the late maturation steps of the functional core of the 30S ribosomal subunit. Helps release RbfA from mature subunits. May play a role in the assembly of ribosomal proteins into the subunit. Circularly permuted GTPase that catalyzes slow GTP hydrolysis, GTPase activity is stimulated by the 30S ribosomal subunit. This chain is Small ribosomal subunit biogenesis GTPase RsgA, found in Streptococcus mutans serotype c (strain ATCC 700610 / UA159).